The primary structure comprises 252 residues: Imidazole glycerol phosphate synthase subunit HisF (252 aa).

Residues Asp11 and Asp130 contribute to the active site.

This sequence belongs to the HisA/HisF family. As to quaternary structure, heterodimer of HisH and HisF.

The protein resides in the cytoplasm. It catalyses the reaction 5-[(5-phospho-1-deoxy-D-ribulos-1-ylimino)methylamino]-1-(5-phospho-beta-D-ribosyl)imidazole-4-carboxamide + L-glutamine = D-erythro-1-(imidazol-4-yl)glycerol 3-phosphate + 5-amino-1-(5-phospho-beta-D-ribosyl)imidazole-4-carboxamide + L-glutamate + H(+). The protein operates within amino-acid biosynthesis; L-histidine biosynthesis; L-histidine from 5-phospho-alpha-D-ribose 1-diphosphate: step 5/9. IGPS catalyzes the conversion of PRFAR and glutamine to IGP, AICAR and glutamate. The HisF subunit catalyzes the cyclization activity that produces IGP and AICAR from PRFAR using the ammonia provided by the HisH subunit. This chain is Imidazole glycerol phosphate synthase subunit HisF, found in Desulforamulus reducens (strain ATCC BAA-1160 / DSM 100696 / MI-1) (Desulfotomaculum reducens).